Reading from the N-terminus, the 220-residue chain is Pyridoxine/pyridoxamine 5'-phosphate oxidase (220 aa).

FMN contacts are provided by residues 69–74 (RVVLLK), 84–85 (YT), Arg-90, Lys-91, and Gln-113. Lys-74 lines the substrate pocket. Positions 131, 135, and 139 each coordinate substrate. FMN-binding positions include 148 to 149 (QS) and Trp-193. Residue 199-201 (RLH) participates in substrate binding. Residue Arg-203 coordinates FMN.

The protein belongs to the pyridoxamine 5'-phosphate oxidase family. In terms of assembly, homodimer. FMN serves as cofactor.

The catalysed reaction is pyridoxamine 5'-phosphate + O2 + H2O = pyridoxal 5'-phosphate + H2O2 + NH4(+). It carries out the reaction pyridoxine 5'-phosphate + O2 = pyridoxal 5'-phosphate + H2O2. It functions in the pathway cofactor metabolism; pyridoxal 5'-phosphate salvage; pyridoxal 5'-phosphate from pyridoxamine 5'-phosphate: step 1/1. Its pathway is cofactor metabolism; pyridoxal 5'-phosphate salvage; pyridoxal 5'-phosphate from pyridoxine 5'-phosphate: step 1/1. Its function is as follows. Catalyzes the oxidation of either pyridoxine 5'-phosphate (PNP) or pyridoxamine 5'-phosphate (PMP) into pyridoxal 5'-phosphate (PLP). The chain is Pyridoxine/pyridoxamine 5'-phosphate oxidase from Myxococcus xanthus.